Reading from the N-terminus, the 1059-residue chain is Isoleucine--tRNA ligase (1059 aa).

The short motif at 47 to 57 is the 'HIGH' region element; sequence PYTSGQMHLGT. The 'KMSKS' region motif lies at 606 to 610; sequence KMSKS. Lys-609 is an ATP binding site.

This sequence belongs to the class-I aminoacyl-tRNA synthetase family. IleS type 2 subfamily. In terms of assembly, monomer. The cofactor is Zn(2+).

The protein resides in the cytoplasm. It catalyses the reaction tRNA(Ile) + L-isoleucine + ATP = L-isoleucyl-tRNA(Ile) + AMP + diphosphate. Its function is as follows. Catalyzes the attachment of isoleucine to tRNA(Ile). As IleRS can inadvertently accommodate and process structurally similar amino acids such as valine, to avoid such errors it has two additional distinct tRNA(Ile)-dependent editing activities. One activity is designated as 'pretransfer' editing and involves the hydrolysis of activated Val-AMP. The other activity is designated 'posttransfer' editing and involves deacylation of mischarged Val-tRNA(Ile). In Haloquadratum walsbyi (strain DSM 16790 / HBSQ001), this protein is Isoleucine--tRNA ligase.